Consider the following 305-residue polypeptide: Axin interactor, dorsalization-associated protein B (305 aa).

Residues 126 to 137 (ENLEVEEEEEDG) are compositionally biased toward acidic residues. Residues 126-146 (ENLEVEEEEEDGGAGAGSPDL) are disordered. The segment at 153-220 (GTLLPRLPSE…RKEDTYVHFN (68 aa)) is axin-binding. Residues 156 to 303 (LPRLPSEPGM…LYLHLLQTLL (148 aa)) form the C2 Aida-type domain.

The protein belongs to the AIDA family.

Its function is as follows. Acts as a ventralizing factor during embryogenesis. Inhibits axin-mediated JNK activation by binding axin and disrupting axin homodimerization. This in turn antagonizes a Wnt/beta-catenin-independent dorsalization pathway activated by axin/JNK-signaling. The sequence is that of Axin interactor, dorsalization-associated protein B (aida-b) from Xenopus laevis (African clawed frog).